A 260-amino-acid chain; its full sequence is MRILVTNDDGISAPGLAVLEQIATELAGPEGEVWIVAPAFEQSGVGHCISYTHPSILSELGPRRFAAEGSPADCVLAALHVVMKDTPPDLILSGVNRGNNSAENALYSGTLGGAMEGALQGVPAMALSQYYGSGNRDLENPFEAARAHGAEVVRKLLSATPQNDSPYRLFYNINFPPVAAGDVKGIKVTTQGCRSGKRFSAEEQFSPNGKRFIWVKGGDQQVSTAPETDAAANLDGFISVTPMRADLTAHDAVEALKAIE.

Residues Asp8, Asp9, Ser43, and Asn96 each coordinate a divalent metal cation.

The protein belongs to the SurE nucleotidase family. The cofactor is a divalent metal cation.

The protein localises to the cytoplasm. It catalyses the reaction a ribonucleoside 5'-phosphate + H2O = a ribonucleoside + phosphate. Nucleotidase that shows phosphatase activity on nucleoside 5'-monophosphates. This chain is 5'-nucleotidase SurE, found in Ruegeria sp. (strain TM1040) (Silicibacter sp.).